Consider the following 284-residue polypeptide: MELERIVGSALLTFVQAHLPEADLSGLDEVIFSYVLGVLEDLGPSGPSEENFDMEAFTEMMEAYVPGFAHIPRGIIGDMMQKLSVQLSDARNKENLHPQSSCVQGQVPIFPETPRQAEKLEEESRPPAAPGNTLDEAAAAEELPGVDVLLEVFPTCSMEQAQWVLAKARGDLEEAVHMLVEGKEEGPPGWDGPSQDLPRRLRGPQKDDLKSFILQKYMMVDRAEDQKTHRPMAPKEAPKKLIRYIDNQVVSTKGERFKDVRNPEAEEMKATYINLKPARKYRFH.

A CUE domain is found at 141–184; sequence EELPGVDVLLEVFPTCSMEQAQWVLAKARGDLEEAVHMLVEGKE. The interval 183–204 is disordered; that stretch reads KEEGPPGWDGPSQDLPRRLRGP.

It belongs to the CUEDC2 family. In terms of assembly, interacts with PGR and ESR1.

It localises to the cytoplasm. Its subcellular location is the nucleus. In terms of biological role, controls PGR and ESR1 protein levels through their targeting for ubiquitination and subsequent proteasomal degradation. In Mus musculus (Mouse), this protein is CUE domain-containing protein 2 (Cuedc2).